The chain runs to 262 residues: Nurim (262 aa).

The Nuclear segment spans residues 1–4; sequence MAPA. The helical transmembrane segment at 5-28 threads the bilayer; that stretch reads LLLVPAALASFVLAFGTGVEFVRF. At 29 to 58 the chain is on the perinuclear space side; sequence TSLRPLLGGIPESGGPDARHGWLAALQDRS. A helical transmembrane segment spans residues 59 to 80; the sequence is ILASLAWDLCLLLLFVVQHSLM. Over 81–97 the chain is Nuclear; the sequence is ATEAVKAWTSRYFGVLQ. A helical transmembrane segment spans residues 98 to 114; sequence RSLYVACTALALQLVMR. Residues 115-133 lie on the Perinuclear space side of the membrane; sequence YWEATPRGPVLWEARAEPW. The chain crosses the membrane as a helical span at residues 134–164; the sequence is ATWVPLLCFVLHVVSWLLIFSILLVFDYAEL. Residues 165 to 191 are Nuclear-facing; sequence MGLKQVYYHVLGLGEPLSLKSPRALRL. The helical transmembrane segment at 192 to 210 threads the bilayer; it reads FSHLRHPVCVELLTVLWVV. Topologically, residues 211–216 are perinuclear space; the sequence is PTLGTD. A helical membrane pass occupies residues 217–234; that stretch reads RLLLALLFTLYLGLAHGL. Topologically, residues 235–262 are nuclear; the sequence is DQQDLRYLRSQLQRKLQLLSRPQDGEAE.

Belongs to the nurim family.

It localises to the nucleus inner membrane. The chain is Nurim (Nrm) from Rattus norvegicus (Rat).